A 49-amino-acid chain; its full sequence is uncharacterized protein (49 aa).

Residues 6–28 (IYPLTVFYFFAIEMSVFCYYNWF) form a helical membrane-spanning segment.

It is found in the membrane. This is an uncharacterized protein from Saccharomyces cerevisiae (strain ATCC 204508 / S288c) (Baker's yeast).